The sequence spans 1196 residues: ATP-dependent helicase/deoxyribonuclease subunit B (1196 aa).

C823, C1149, C1152, and C1158 together coordinate [4Fe-4S] cluster.

This sequence belongs to the helicase family. AddB/RexB type 2 subfamily. Heterodimer of AddA and RexB. Mg(2+) is required as a cofactor. Requires [4Fe-4S] cluster as cofactor.

Its function is as follows. The heterodimer acts as both an ATP-dependent DNA helicase and an ATP-dependent, dual-direction single-stranded exonuclease. Recognizes the chi site generating a DNA molecule suitable for the initiation of homologous recombination. This subunit has 5' -&gt; 3' nuclease activity but not helicase activity. The protein is ATP-dependent helicase/deoxyribonuclease subunit B of Enterococcus faecalis (strain ATCC 700802 / V583).